Here is a 102-residue protein sequence, read N- to C-terminus: Small ribosomal subunit protein uS10 (102 aa).

This sequence belongs to the universal ribosomal protein uS10 family. As to quaternary structure, part of the 30S ribosomal subunit.

Functionally, involved in the binding of tRNA to the ribosomes. The chain is Small ribosomal subunit protein uS10 from Syntrophus aciditrophicus (strain SB).